Consider the following 183-residue polypeptide: Oligoribonuclease (183 aa).

The region spanning 8–171 is the Exonuclease domain; sequence LIWLDLEMTG…QDIRDSIEEL (164 aa). Tyr129 is a catalytic residue.

The protein belongs to the oligoribonuclease family.

The protein resides in the cytoplasm. In terms of biological role, 3'-to-5' exoribonuclease specific for small oligoribonucleotides. This chain is Oligoribonuclease, found in Coxiella burnetii (strain RSA 493 / Nine Mile phase I).